A 248-amino-acid polypeptide reads, in one-letter code: uncharacterized protein (248 aa).

8 to 32 serves as a coordination point for NADP(+); that stretch reads EVALVTGASSGIGKAIALELASAGL. Residue Ser134 participates in substrate binding. The active-site Proton acceptor is Tyr147.

Belongs to the short-chain dehydrogenases/reductases (SDR) family.

This is an uncharacterized protein from Sinorhizobium fredii (strain NBRC 101917 / NGR234).